Reading from the N-terminus, the 911-residue chain is Protein SOSEKI (911 aa).

Residues 15 to 107 form a DIX-like oligomerization domain region; the sequence is TKVQVVYYLS…LVLKGSELYT (93 aa). Disordered regions lie at residues 219–470 and 492–810; these read SETL…TQCE and LCGN…PPRI. Basic and acidic residues-rich tracts occupy residues 253-286 and 295-407; these read TDREHSYGPPRKTESMGRERSLPRDLPRSREVSR and EAPR…EELP. Positions 414–423 are enriched in polar residues; sequence SPTCSESGDS. The segment covering 452 to 467 has biased composition (low complexity); that stretch reads SSSTRSSTPSTSAAST. The Association to cell membranes motif lies at 493-494; that stretch reads CG. Residues 511–527 are compositionally biased toward low complexity; it reads PLAAAAQPASGAVPQSP. Over residues 591–607 the composition is skewed to polar residues; sequence SGVNSAMATPFLQTENN. A compositionally biased stretch (low complexity) spans 608 to 662; the sequence is SPSSSESSSAAVSSGKKPASISLSGTSDASDGGNGASSTASSSSEVQNNVSVKEV. Residues 663-683 are compositionally biased toward polar residues; that stretch reads ITQQLPSPSSSEGRPSLNIDT. The span at 696–709 shows a compositional bias: basic and acidic residues; the sequence is SDVRETVKTTRPDS. The span at 722-733 shows a compositional bias: polar residues; the sequence is PVRTQLSSSPSF. Basic and acidic residues predominate over residues 735-771; sequence KRIEDARARARSLVSKEIRSGESRSSKDLLKENDRVK. Low complexity predominate over residues 772-784; the sequence is TSSGSMRSGSTRT. Polar residues predominate over residues 785 to 805; that stretch reads PNNKNGTTGAGSKTLSGTFNR. Residues 864-893 form a C2HC/C3H-type zinc finger; the sequence is ILQECGQCGRTFKPDSLKVHMRGCHALRRS. 4 residues coordinate Zn(2+): cysteine 868, cysteine 871, histidine 883, and cysteine 887.

This sequence belongs to the SOSEKI family. In terms of assembly, homodimer. Forms long polymer filaments with other SOKs proteins polymers crucial for polar localization and biological activity. Zn(2+) is required as a cofactor.

The protein localises to the cell membrane. Functionally, SOSEKI proteins locally interpret global polarity cues and can influence cell division orientation to coordinate cell polarization relative to body axes. The chain is Protein SOSEKI from Marchantia polymorpha (Common liverwort).